The chain runs to 144 residues: uncharacterized protein (144 aa).

Residues 24–67 are a coiled coil; it reads KLKELYQRLNQGINVEEVLKETVEDYKEKMEKYILEVLEEIEKY.

This is an uncharacterized protein from Aquifex aeolicus (strain VF5).